The sequence spans 131 residues: Leptin receptor gene-related protein (131 aa).

4 helical membrane-spanning segments follow: residues 7 to 27 (LVAL…GCAL), 32 to 52 (VYWP…YFIA), 69 to 89 (LAYF…VVLA), and 100 to 120 (GLVL…FLVF).

The protein belongs to the OB-RGRP/VPS55 family. As to quaternary structure, interacts with LEPR. Interacts with RAB13. As to expression, widely distributed in the brain, with elevated expression in the hypothalamic regions, including the paraventricular nucleus. In the placenta, present at high levels in the junctional zone situated towards the maternal aspect and throughout the labyrinth zone in close proximity to the developing fetus.

The protein localises to the golgi apparatus membrane. The protein resides in the endosome membrane. Negatively regulates leptin receptor (LEPR) cell surface expression, and thus decreases response to leptin. Negatively regulates growth hormone (GH) receptor cell surface expression in liver. May play a role in liver resistance to GH during periods of reduced nutrient availability. In Mus musculus (Mouse), this protein is Leptin receptor gene-related protein (Leprot).